A 283-amino-acid polypeptide reads, in one-letter code: Thymidylate synthase (283 aa).

Arg22 provides a ligand contact to dUMP. Residue Cys160 is the Nucleophile of the active site. Residues 180–183 (RSCD), Asn191, and 221–223 (HIY) contribute to the dUMP site. Asp183 contributes to the (6R)-5,10-methylene-5,6,7,8-tetrahydrofolate binding site. Residue Ser282 coordinates (6R)-5,10-methylene-5,6,7,8-tetrahydrofolate.

Belongs to the thymidylate synthase family. Bacterial-type ThyA subfamily. In terms of assembly, homodimer.

The protein localises to the cytoplasm. The catalysed reaction is dUMP + (6R)-5,10-methylene-5,6,7,8-tetrahydrofolate = 7,8-dihydrofolate + dTMP. It participates in pyrimidine metabolism; dTTP biosynthesis. Its function is as follows. Catalyzes the reductive methylation of 2'-deoxyuridine-5'-monophosphate (dUMP) to 2'-deoxythymidine-5'-monophosphate (dTMP) while utilizing 5,10-methylenetetrahydrofolate (mTHF) as the methyl donor and reductant in the reaction, yielding dihydrofolate (DHF) as a by-product. This enzymatic reaction provides an intracellular de novo source of dTMP, an essential precursor for DNA biosynthesis. This chain is Thymidylate synthase, found in Psychromonas ingrahamii (strain DSM 17664 / CCUG 51855 / 37).